The chain runs to 252 residues: Probable transcriptional regulatory protein THA_1246 (252 aa).

The protein belongs to the TACO1 family.

It is found in the cytoplasm. This chain is Probable transcriptional regulatory protein THA_1246, found in Thermosipho africanus (strain TCF52B).